Consider the following 273-residue polypeptide: Outer surface protein A (273 aa).

Positions Met-1–Ala-16 are cleaved as a signal peptide. Cys-17 carries the N-palmitoyl cysteine lipid modification. Cys-17 is lipidated: S-diacylglycerol cysteine.

The protein belongs to the OspA lipoprotein family.

It localises to the cell outer membrane. The protein localises to the cell surface. This chain is Outer surface protein A, found in Borreliella burgdorferi (Lyme disease spirochete).